The primary structure comprises 384 residues: MYLQELQLQQFRNYPTAKLTFGQGINVLLGENAQGKTNLLEAIYVLALTRSHRTANDHDLVNWQAKTAKVSGRVVKAAGAVPLELTFSRQGKRARVNHLEQARLSQYVGQLNVILFAPEDLAIVKGAPTVRRRFMDMEFGQMNPRYLYNLSQYRTLLKQRNRYLKDLQHKQNKDLLFLSVLSDQLAAFGAEIIAQRLAMLQKLEHWAQAIHGEISQQREELTFHYATQVADDQLTDVPTITAALSALYAKQQDKELYQGTTLVGPHRDDLHFQVNGKNVQTFGSQGQQRTTALSVKLAEIDLMKEETGEYPVLLLDDVLSELDDARQTHLLTAIQDKVQTFITTTSLSGITRQLIKDPTIFHVAEGTVVADAVDSDDPAASKED.

30 to 37 (GENAQGKT) contributes to the ATP binding site.

It belongs to the RecF family.

It localises to the cytoplasm. Functionally, the RecF protein is involved in DNA metabolism; it is required for DNA replication and normal SOS inducibility. RecF binds preferentially to single-stranded, linear DNA. It also seems to bind ATP. This Levilactobacillus brevis (strain ATCC 367 / BCRC 12310 / CIP 105137 / JCM 1170 / LMG 11437 / NCIMB 947 / NCTC 947) (Lactobacillus brevis) protein is DNA replication and repair protein RecF.